Reading from the N-terminus, the 62-residue chain is MDMKKLIERINFLYKKSKEEGLTKEEKVEQQKLRREYIDIIKGNVKVQLEGVEKIPTPNRKN.

This sequence belongs to the UPF0291 family.

Its subcellular location is the cytoplasm. The sequence is that of UPF0291 protein CLD_1956 from Clostridium botulinum (strain Okra / Type B1).